We begin with the raw amino-acid sequence, 353 residues long: MSLPLSLQTLVKKTVASQCLSTDEHCILKHCGLWWHDVPLKLCMDRGQIQIKSGFLGEDIDLHIALIIAVKENNYSLIKLFTEWGAHINYSLLSINTEHIRELCRQLGAKETLEDNDIFRIFTKIMHNKTSGRIILCHEIFMNNPNIENKFTIQLRGLICKRLWGLIEIKETDELNDLLVKYWYAKAVQYECKDAICFLDEKYTDLNEWRLKCLLYYNKIYELHEMYHKEKVQIDVHDMICLASTKDNNPLTIYYCYALGGNINQAMLTSVQYYNIGNIFFCIDLGGNAFEEGRAIAEQKGYHFLSHSLTLDIYSSDASLPLNLKDPEEISSLLKDYKSKNLSIIWEYSHNIL.

It belongs to the asfivirus MGF 360 family.

In terms of biological role, plays a role in virus cell tropism, and may be required for efficient virus replication in macrophages. This is Protein MGF 360-13L from African swine fever virus (isolate Warthog/Namibia/Wart80/1980) (ASFV).